The following is a 411-amino-acid chain: Secretion apparatus protein BsaZ (411 aa).

4 consecutive transmembrane segments (helical) span residues 28 to 48, 80 to 100, 137 to 157, and 175 to 195; these read IVALIVIATGALAAPALVDLT, IAAPFVLLCAAAGALPSLVQS, ALLYVGVFALTVRVFAGLYHA, and IVLTVRLVLLFLLCALPVLIL. Residues 341–411 form a disordered region; the sequence is AANRGGPPPE…APARTGDQNA (71 aa). Residues 370–404 show a composition bias toward low complexity; sequence DACADNAFPDDAPPGAAAPNAGSPDGPAPDGGAPA.

It belongs to the type III secretion exporter family.

The protein localises to the cell membrane. Functionally, part of the bsa type III secretion system, is involved in the intracellular replication of invading bacteria inside the host cell. Probably necessary for the lysis of the vacuole membrane and escape into the host cell cytoplasm. In Burkholderia pseudomallei (strain 1710b), this protein is Secretion apparatus protein BsaZ (bsaZ).